A 565-amino-acid polypeptide reads, in one-letter code: NAD-dependent malic enzyme (565 aa).

Catalysis depends on tyrosine 104, which acts as the Proton donor. Position 157 (arginine 157) interacts with NAD(+). The active-site Proton acceptor is lysine 175. Residues glutamate 246, aspartate 247, and aspartate 270 each coordinate a divalent metal cation. NAD(+)-binding residues include aspartate 270 and asparagine 418.

The protein belongs to the malic enzymes family. In terms of assembly, homotetramer. It depends on Mg(2+) as a cofactor. The cofactor is Mn(2+).

The enzyme catalyses (S)-malate + NAD(+) = pyruvate + CO2 + NADH. The catalysed reaction is oxaloacetate + H(+) = pyruvate + CO2. This Salmonella choleraesuis (strain SC-B67) protein is NAD-dependent malic enzyme.